Consider the following 138-residue polypeptide: Large ribosomal subunit protein uL16 (138 aa).

The span at 1–13 (MLQPSRRKFRKEQ) shows a compositional bias: basic residues. A disordered region spans residues 1 to 22 (MLQPSRRKFRKEQKGRNTGIAT).

The protein belongs to the universal ribosomal protein uL16 family. In terms of assembly, part of the 50S ribosomal subunit.

Its function is as follows. Binds 23S rRNA and is also seen to make contacts with the A and possibly P site tRNAs. The sequence is that of Large ribosomal subunit protein uL16 from Methylibium petroleiphilum (strain ATCC BAA-1232 / LMG 22953 / PM1).